We begin with the raw amino-acid sequence, 147 residues long: UPF0306 protein YhbP (147 aa).

The protein belongs to the UPF0306 family.

This Escherichia coli O17:K52:H18 (strain UMN026 / ExPEC) protein is UPF0306 protein YhbP.